A 63-amino-acid polypeptide reads, in one-letter code: Potassium channel toxin Sp4 (63 aa).

The N-terminal stretch at 1-20 (MNKVHFALFLLVLTVLAVSG) is a signal peptide. 3 cysteine pairs are disulfide-bonded: Cys31–Cys53, Cys38–Cys58, and Cys42–Cys60.

Belongs to the long chain scorpion toxin family. Class 2 subfamily. As to expression, expressed by the venom gland.

The protein resides in the secreted. In terms of biological role, this recombinant toxin selectively inhibits mouse voltage-gated potassium channel Kv1.3/KCNA3 (IC(50)=24.73 nM). This chain is Potassium channel toxin Sp4, found in Scorpiops pococki (Scorpion).